Reading from the N-terminus, the 439-residue chain is Type I secretion system membrane fusion protein PrsE (439 aa).

The chain crosses the membrane as a helical span at residues 20-40; it reads LIGVSVLALALVAGVGGWAAT.

It belongs to the membrane fusion protein (MFP) (TC 8.A.1) family. As to quaternary structure, part of a type I secretion system composed of PrsD and PrsE.

Its subcellular location is the cell inner membrane. In terms of biological role, mediates secretion of glycanase ExsH. The chain is Type I secretion system membrane fusion protein PrsE (prsE) from Rhizobium meliloti (strain 1021) (Ensifer meliloti).